Reading from the N-terminus, the 83-residue chain is Hainantoxin-III 4 (83 aa).

The signal sequence occupies residues 1–21; it reads MKASMYLALAGLVLLFVVGYA. Positions 22–48 are excised as a propeptide; it reads SESEEKEFPRELLSKIFAVDDFKGKER. 3 cysteine pairs are disulfide-bonded: C50/C65, C57/C70, and C64/C77. L81 bears the Leucine amide mark.

Belongs to the neurotoxin 10 (Hwtx-1) family. 15 (Hntx-3) subfamily. In terms of assembly, monomer. In terms of tissue distribution, expressed by the venom gland.

It localises to the secreted. In terms of biological role, selective antagonist of neuronal tetrodotoxin (TTX)-sensitive voltage-gated sodium channels (IC(50)=1270 nM on Nav1.1/SCN1A, 270 nM on Nav1.2/SCN2A, 491 nM on Nav1.3/SCN3A and 232 nM on Nav1.7/SCN9A). This toxin suppress Nav1.7 current amplitude without significantly altering the activation, inactivation, and repriming kinetics. Short extreme depolarizations partially activate the toxin-bound channel, indicating voltage-dependent inhibition of this toxin. This toxin increases the deactivation of the Nav1.7 current after extreme depolarizations. The toxin-Nav1.7 complex is gradually dissociated upon prolonged strong depolarizations in a voltage-dependent manner, and the unbound toxin rebinds to Nav1.7 after a long repolarization. Moreover, analysis of chimeric channels showed that the DIIS3-S4 linker is critical for toxin binding to Nav1.7. These data are consistent with this toxin interacting with Nav1.7 site 4 and trapping the domain II voltage sensor in the closed state. This is Hainantoxin-III 4 from Cyriopagopus hainanus (Chinese bird spider).